We begin with the raw amino-acid sequence, 79 residues long: Small ribosomal subunit protein bS18c (79 aa).

The protein belongs to the bacterial ribosomal protein bS18 family. As to quaternary structure, part of the 30S ribosomal subunit.

The protein localises to the plastid. It localises to the chloroplast. The protein is Small ribosomal subunit protein bS18c of Physcomitrium patens (Spreading-leaved earth moss).